A 207-amino-acid polypeptide reads, in one-letter code: Outer-membrane lipoprotein LolB (207 aa).

An N-terminal signal peptide occupies residues 1-21 (MPLPDFRLIRLLPLAALVLTA). C22 carries the N-palmitoyl cysteine lipid modification. Residue C22 is the site of S-diacylglycerol cysteine attachment.

This sequence belongs to the LolB family. Monomer.

It is found in the cell outer membrane. Its function is as follows. Plays a critical role in the incorporation of lipoproteins in the outer membrane after they are released by the LolA protein. The polypeptide is Outer-membrane lipoprotein LolB (Escherichia coli (strain K12 / MC4100 / BW2952)).